The sequence spans 91 residues: Sec-independent protein translocase protein TatA (91 aa).

The chain crosses the membrane as a helical span at residues M1–G21. The disordered stretch occupies residues A42 to V91. The span at E51 to Q65 shows a compositional bias: low complexity. A compositionally biased stretch (basic and acidic residues) spans Q78–V91.

Belongs to the TatA/E family. As to quaternary structure, the Tat system comprises two distinct complexes: a TatABC complex, containing multiple copies of TatA, TatB and TatC subunits, and a separate TatA complex, containing only TatA subunits. Substrates initially bind to the TatABC complex, which probably triggers association of the separate TatA complex to form the active translocon.

The protein resides in the cell inner membrane. Its function is as follows. Part of the twin-arginine translocation (Tat) system that transports large folded proteins containing a characteristic twin-arginine motif in their signal peptide across membranes. TatA could form the protein-conducting channel of the Tat system. This chain is Sec-independent protein translocase protein TatA, found in Pseudomonas savastanoi pv. phaseolicola (strain 1448A / Race 6) (Pseudomonas syringae pv. phaseolicola (strain 1448A / Race 6)).